We begin with the raw amino-acid sequence, 298 residues long: Cyclin-dependent kinase 2 (298 aa).

N-acetylmethionine is present on M1. The region spanning 4 to 286 is the Protein kinase domain; that stretch reads FQKVEKIGEG…AKAALAHPFF (283 aa). K6 is subject to N6-acetyllysine. An ATP-binding site is contributed by 10 to 18; that stretch reads IGEGTYGVV. T14 carries the post-translational modification Phosphothreonine. The residue at position 15 (Y15) is a Phosphotyrosine; by WEE1. Y19 is modified (phosphotyrosine). ATP is bound by residues K33, 81–83, and D86; that span reads EFL. D127 acts as the Proton acceptor in catalysis. ATP is bound by residues 129–132 and D145; that span reads KPQN. Mg(2+) contacts are provided by N132 and D145. T160 carries the phosphothreonine; by CAK and CCRK modification.

Belongs to the protein kinase superfamily. CMGC Ser/Thr protein kinase family. CDC2/CDKX subfamily. As to quaternary structure, found in a complex with CABLES1, CCNA1 and CCNE1. Interacts with CABLES1. Interacts with UHRF2. Part of a complex consisting of UHRF2, CDK2 and CCNE1. Interacts with the Speedy/Ringo proteins SPDYA and SPDYC. Interaction with SPDYA promotes kinase activation via a conformation change that alleviates obstruction of the substrate-binding cleft by the T-loop. Found in a complex with both SPDYA and CDKN1B/KIP1. Binds to RB1 and CDK7. Binding to CDKN1A (p21) leads to CDK2/cyclin E inactivation at the G1-S phase DNA damage checkpoint, thereby arresting cells at the G1-S transition during DNA repair. Associated with PTPN6 and beta-catenin/CTNNB1. Interacts with CACUL1. May interact with CEP63. Interacts with ANKRD17. Interacts with CEBPA (when phosphorylated). Forms a ternary complex with CCNA2 and CDKN1B; CDKN1B inhibits the kinase activity of CDK2 through conformational rearrangements. Interacts with cyclins A, B1, B3, D, or E. Interacts with CDK2AP2. Requires Mg(2+) as cofactor. Phosphorylated at Thr-160 by CDK7 in a CAK complex. Phosphorylation at Thr-160 promotes kinase activity, whereas phosphorylation at Tyr-15 by WEE1 reduces slightly kinase activity. Phosphorylated on Thr-14 and Tyr-15 during S and G2 phases before being dephosphorylated by CDC25A. Post-translationally, nitrosylated after treatment with nitric oxide (DETA-NO).

The protein resides in the cytoplasm. Its subcellular location is the cytoskeleton. The protein localises to the microtubule organizing center. It is found in the centrosome. It localises to the nucleus. The protein resides in the cajal body. Its subcellular location is the endosome. It carries out the reaction L-seryl-[protein] + ATP = O-phospho-L-seryl-[protein] + ADP + H(+). It catalyses the reaction L-threonyl-[protein] + ATP = O-phospho-L-threonyl-[protein] + ADP + H(+). Phosphorylation at Thr-14 or Tyr-15 inactivates the enzyme, while phosphorylation at Thr-160 activates it. Inhibited by 1,25-dihydroxyvitamin D(3) (1,25-(OH)(2)D(3)), AG-024322, N-(4-Piperidinyl)-4-(2,6-dichlorobenzoylamino)-1H-pyrazole-3-carboxamide (AT7519), R547 (Ro-4584820), purine, pyrimidine and pyridine derivatives, 2-aminopyrimidines, paullones, thiazo derivatives, macrocyclic quinoxalin-2-one, pyrazolo[1,5-a]-1,3,5-triazine, pyrazolo[1,5-a]pyrimidine, 2-(1-ethyl-2-hydroxyethylamino)-6-benzylamino-9-isopropylpurine (roscovitine, seliciclib and CYC202), SNS-032 (BMS-387032), triazolo[1,5-a]pyrimidines, staurosporine and olomoucine. Stimulated by MYC. Inactivated by CDKN1A (p21). Serine/threonine-protein kinase involved in the control of the cell cycle; essential for meiosis, but dispensable for mitosis. Phosphorylates CABLES1, CTNNB1, CDK2AP2, ERCC6, NBN, USP37, p53/TP53, NPM1, CDK7, RB1, BRCA2, MYC, NPAT, EZH2. Triggers duplication of centrosomes and DNA. Acts at the G1-S transition to promote the E2F transcriptional program and the initiation of DNA synthesis, and modulates G2 progression; controls the timing of entry into mitosis/meiosis by controlling the subsequent activation of cyclin B/CDK1 by phosphorylation, and coordinates the activation of cyclin B/CDK1 at the centrosome and in the nucleus. Crucial role in orchestrating a fine balance between cellular proliferation, cell death, and DNA repair in embryonic stem cells (ESCs). Activity of CDK2 is maximal during S phase and G2; activated by interaction with cyclin E during the early stages of DNA synthesis to permit G1-S transition, and subsequently activated by cyclin A2 (cyclin A1 in germ cells) during the late stages of DNA replication to drive the transition from S phase to mitosis, the G2 phase. EZH2 phosphorylation promotes H3K27me3 maintenance and epigenetic gene silencing. Cyclin E/CDK2 prevents oxidative stress-mediated Ras-induced senescence by phosphorylating MYC. Involved in G1-S phase DNA damage checkpoint that prevents cells with damaged DNA from initiating mitosis; regulates homologous recombination-dependent repair by phosphorylating BRCA2, this phosphorylation is low in S phase when recombination is active, but increases as cells progress towards mitosis. In response to DNA damage, double-strand break repair by homologous recombination a reduction of CDK2-mediated BRCA2 phosphorylation. Involved in regulation of telomere repair by mediating phosphorylation of NBN. Phosphorylation of RB1 disturbs its interaction with E2F1. NPM1 phosphorylation by cyclin E/CDK2 promotes its dissociates from unduplicated centrosomes, thus initiating centrosome duplication. Cyclin E/CDK2-mediated phosphorylation of NPAT at G1-S transition and until prophase stimulates the NPAT-mediated activation of histone gene transcription during S phase. Required for vitamin D-mediated growth inhibition by being itself inactivated. Involved in the nitric oxide- (NO) mediated signaling in a nitrosylation/activation-dependent manner. USP37 is activated by phosphorylation and thus triggers G1-S transition. CTNNB1 phosphorylation regulates insulin internalization. Phosphorylates FOXP3 and negatively regulates its transcriptional activity and protein stability. Phosphorylates ERCC6 which is essential for its chromatin remodeling activity at DNA double-strand breaks. Acts as a regulator of the phosphatidylinositol 3-kinase/protein kinase B signal transduction by mediating phosphorylation of the C-terminus of protein kinase B (PKB/AKT1 and PKB/AKT2), promoting its activation. This is Cyclin-dependent kinase 2 (CDK2) from Homo sapiens (Human).